Here is a 62-residue protein sequence, read N- to C-terminus: Large ribosomal subunit protein uL30 (62 aa).

It belongs to the universal ribosomal protein uL30 family. As to quaternary structure, part of the 50S ribosomal subunit.

The protein is Large ribosomal subunit protein uL30 of Staphylococcus carnosus (strain TM300).